A 235-amino-acid polypeptide reads, in one-letter code: Aspartate/glutamate leucyltransferase (235 aa).

This sequence belongs to the R-transferase family. Bpt subfamily.

Its subcellular location is the cytoplasm. It catalyses the reaction N-terminal L-glutamyl-[protein] + L-leucyl-tRNA(Leu) = N-terminal L-leucyl-L-glutamyl-[protein] + tRNA(Leu) + H(+). The catalysed reaction is N-terminal L-aspartyl-[protein] + L-leucyl-tRNA(Leu) = N-terminal L-leucyl-L-aspartyl-[protein] + tRNA(Leu) + H(+). Its function is as follows. Functions in the N-end rule pathway of protein degradation where it conjugates Leu from its aminoacyl-tRNA to the N-termini of proteins containing an N-terminal aspartate or glutamate. In Pseudomonas fluorescens (strain SBW25), this protein is Aspartate/glutamate leucyltransferase.